We begin with the raw amino-acid sequence, 1051 residues long: Inactive tyrosine-protein kinase 7 (1051 aa).

A signal peptide spans 1-22; sequence MAALRALLLLLAVGAQAAIRFA. Ig-like C2-type domains are found at residues 23–105, 115–204, 213–298, 308–388, 393–472, 487–566, and 573–661; these read KEPY…ANAS, SVVL…DNFT, PQAV…KATL, PFSP…LSIT, PKWV…GSIE, PPPQ…ATVQ, and VTFK…AFLY. The Extracellular segment spans residues 23–685; that stretch reads KEPYSQDALH…SHTPYKMIQT (663 aa). Cys-40 and Cys-88 are joined by a disulfide. Residue Asn-103 is glycosylated (N-linked (GlcNAc...) asparagine). Cys-137 and Cys-187 form a disulfide bridge. N-linked (GlcNAc...) asparagine glycans are attached at residues Asn-202, Asn-255, and Asn-264. 5 disulfide bridges follow: Cys-234–Cys-282, Cys-326–Cys-372, Cys-414–Cys-462, Cys-505–Cys-551, and Cys-594–Cys-645. N-linked (GlcNAc...) asparagine glycosylation is found at Asn-444, Asn-548, and Asn-627. The chain crosses the membrane as a helical span at residues 686 to 706; the sequence is IGLSVGAAVAYIIIVLGLMFY. Topologically, residues 707–1051 are cytoplasmic; sequence CKKRRKAKRL…LGDSPADSKA (345 aa). The region spanning 777–1048 is the Protein kinase; inactive domain; the sequence is LQTITTLGRG…AAALGDSPAD (272 aa).

This sequence belongs to the protein kinase superfamily. Tyr protein kinase family. Insulin receptor subfamily. As to expression, expressed in bone marrow, spleen, bursa, thymus and brain. Weakly expressed in fibroblasts. Also expressed in embryonic liver.

The protein resides in the membrane. Inactive tyrosine kinase involved in Wnt signaling. pathway. The protein is Inactive tyrosine-protein kinase 7 (PTK7) of Gallus gallus (Chicken).